The sequence spans 1083 residues: LIM and calponin homology domains-containing protein 1 (1083 aa).

Disordered stretches follow at residues M1 to T22, S185 to D248, and R291 to F311. Positions D21–N138 constitute a Calponin-homology (CH) domain. Residues R229–D248 show a composition bias toward basic and acidic residues. Positions L356 to R424 form a coiled coil. Residues P462 to L474 show a composition bias toward low complexity. Disordered stretches follow at residues P462 to P512, Q625 to V661, K698 to S725, and S759 to E779. Polar residues-rich tracts occupy residues R478–P512 and S640–A657. Residues E716–S725 show a composition bias toward basic and acidic residues. Positions Q784–T835 form a coiled coil. Positions K987–S1006 are disordered. A compositionally biased stretch (polar residues) spans L991–S1006. In terms of domain architecture, LIM zinc-binding spans K1011–A1077.

This sequence belongs to the LIMCH1 family.

The protein localises to the cytoplasm. It localises to the cytoskeleton. Its subcellular location is the stress fiber. Actin stress fibers-associated protein that activates non-muscle myosin IIa. Through the activation of non-muscle myosin IIa, positively regulates actin stress fibers assembly and stabilizes focal adhesions. It therefore negatively regulates cell spreading and cell migration. This chain is LIM and calponin homology domains-containing protein 1 (limch1), found in Xenopus laevis (African clawed frog).